Here is a 359-residue protein sequence, read N- to C-terminus: Mineralocorticoid receptor (359 aa).

Residues 1–49 constitute a DNA-binding region (nuclear receptor); sequence FKRAVEGQHNYLCAGRNDCIIDKIRRKNCPACRVRKCLQAGMNLGARKS. Residues cysteine 13, cysteine 19, cysteine 29, and cysteine 32 each contribute to the Zn(2+) site. Residues 13–37 form an NR C4-type zinc finger; that stretch reads CAGRNDCIIDKIRRKNCPACRVRKC. The disordered stretch occupies residues 48–96; that stretch reads KSKKPGKLKGVNEDSTPTKEGGQTCPGSGGGYLSSGEKELSTSPTNALV. Residues 50-107 form a hinge region; the sequence is KKPGKLKGVNEDSTPTKEGGQTCPGSGGGYLSSGEKELSTSPTNALVPHGPGGGLVTP. The NR LBD domain occupies 108-339; the sequence is YLPPSICSVL…EFPEMLVEII (232 aa). The 21-hydroxyprogesterone site is built by asparagine 145 and glutamine 151. Residues asparagine 145 and glutamine 151 each contribute to the aldosterone site. The progesterone site is built by asparagine 145 and glutamine 151. Residues 157–160 form an important for coactivator binding region; the sequence is KWAK. 21-hydroxyprogesterone-binding residues include arginine 192 and threonine 320. 2 residues coordinate aldosterone: arginine 192 and threonine 320. Progesterone contacts are provided by arginine 192 and threonine 320.

Belongs to the nuclear hormone receptor family. NR3 subfamily.

Its subcellular location is the cytoplasm. The protein resides in the nucleus. In terms of biological role, receptor for both mineralocorticoids (MC) such as cortisol. Binds to mineralocorticoid response elements (MRE) and transactivates target genes. The effect of MC is to increase ion and water transport and thus raise extracellular fluid volume and blood pressure and lower potassium levels. The sequence is that of Mineralocorticoid receptor (nr3c2) from Oncorhynchus mykiss (Rainbow trout).